The following is a 337-amino-acid chain: Adenine deaminase (337 aa).

Zn(2+) is bound by residues His14, His16, and His194. Glu197 acts as the Proton donor in catalysis. Asp275 is a Zn(2+) binding site. Asp276 lines the substrate pocket.

The protein belongs to the metallo-dependent hydrolases superfamily. Adenosine and AMP deaminases family. Adenine deaminase type 2 subfamily. It depends on Zn(2+) as a cofactor.

The enzyme catalyses adenine + H2O + H(+) = hypoxanthine + NH4(+). Catalyzes the hydrolytic deamination of adenine to hypoxanthine. Plays an important role in the purine salvage pathway and in nitrogen catabolism. The sequence is that of Adenine deaminase from Vibrio parahaemolyticus serotype O3:K6 (strain RIMD 2210633).